A 709-amino-acid chain; its full sequence is Elongation factor G (709 aa).

The region spanning 8–290 (NRYRNIGISA…AVIQYMPAPQ (283 aa)) is the tr-type G domain. GTP contacts are provided by residues 17 to 24 (AHIDAGKT), 88 to 92 (DTPGH), and 142 to 145 (NKMD).

This sequence belongs to the TRAFAC class translation factor GTPase superfamily. Classic translation factor GTPase family. EF-G/EF-2 subfamily.

The protein localises to the cytoplasm. In terms of biological role, catalyzes the GTP-dependent ribosomal translocation step during translation elongation. During this step, the ribosome changes from the pre-translocational (PRE) to the post-translocational (POST) state as the newly formed A-site-bound peptidyl-tRNA and P-site-bound deacylated tRNA move to the P and E sites, respectively. Catalyzes the coordinated movement of the two tRNA molecules, the mRNA and conformational changes in the ribosome. This is Elongation factor G from Psychrobacter sp. (strain PRwf-1).